Reading from the N-terminus, the 612-residue chain is DNA mismatch repair protein MutL (612 aa).

The protein belongs to the DNA mismatch repair MutL/HexB family.

Its function is as follows. This protein is involved in the repair of mismatches in DNA. It is required for dam-dependent methyl-directed DNA mismatch repair. May act as a 'molecular matchmaker', a protein that promotes the formation of a stable complex between two or more DNA-binding proteins in an ATP-dependent manner without itself being part of a final effector complex. This is DNA mismatch repair protein MutL from Afipia carboxidovorans (strain ATCC 49405 / DSM 1227 / KCTC 32145 / OM5) (Oligotropha carboxidovorans).